Reading from the N-terminus, the 254-residue chain is Leucyl/phenylalanyl-tRNA--protein transferase (254 aa).

The protein belongs to the L/F-transferase family.

The protein resides in the cytoplasm. The enzyme catalyses N-terminal L-lysyl-[protein] + L-leucyl-tRNA(Leu) = N-terminal L-leucyl-L-lysyl-[protein] + tRNA(Leu) + H(+). It catalyses the reaction N-terminal L-arginyl-[protein] + L-leucyl-tRNA(Leu) = N-terminal L-leucyl-L-arginyl-[protein] + tRNA(Leu) + H(+). It carries out the reaction L-phenylalanyl-tRNA(Phe) + an N-terminal L-alpha-aminoacyl-[protein] = an N-terminal L-phenylalanyl-L-alpha-aminoacyl-[protein] + tRNA(Phe). Functions in the N-end rule pathway of protein degradation where it conjugates Leu, Phe and, less efficiently, Met from aminoacyl-tRNAs to the N-termini of proteins containing an N-terminal arginine or lysine. The polypeptide is Leucyl/phenylalanyl-tRNA--protein transferase (Burkholderia cenocepacia (strain HI2424)).